Reading from the N-terminus, the 259-residue chain is Borneol dehydrogenase, mitochondrial (259 aa).

Residues 1 to 30 (MASTVLRRLEGKVALITGAASGIGESAARL) constitute a mitochondrion transit peptide. Residues 21–23 (SGI), Asp42, 63–64 (DV), and 90–92 (NAG) contribute to the NAD(+) site. Ser144 acts as the Proton donor in catalysis. The substrate site is built by Ser144 and Tyr157. 3 residues coordinate NAD(+): Tyr157, Lys161, and Thr192. Tyr157 serves as the catalytic Proton acceptor. Catalysis depends on Lys161, which acts as the Proton donor/acceptor.

It belongs to the short-chain dehydrogenases/reductases (SDR) family. Specifically expressed in glandular trichomes of mature flowers.

Its subcellular location is the mitochondrion. It catalyses the reaction borneol + NAD(+) = camphor + NADH + H(+). It functions in the pathway secondary metabolite biosynthesis; terpenoid biosynthesis. Functionally, involved in the biosynthesis of monoterpenes natural products related to camphor. Catalyzes the conversion of borneol into camphor. This chain is Borneol dehydrogenase, mitochondrial, found in Lavandula x intermedia (Lavandin).